A 316-amino-acid chain; its full sequence is Apolipoprotein E (316 aa).

An N-terminal signal peptide occupies residues 1 to 18 (MKALWAVLVVTLLAGCLA). 8 tandem repeats follow at residues 76-97 (VLME…EQLG), 98-119 (PMAE…SRLG), 120-141 (ADME…TMLG), 142-163 (QSTE…KRLM), 164-185 (RDAE…EGAE), 186-207 (RGVG…QRTA), 208-229 (NLGA…ARIR), and 230-251 (GRLE…EQME). The segment at 76 to 251 (VLMEDTMTEL…RLEEVREQME (176 aa)) is 8 X 22 AA approximate tandem repeats. Methionine 139 is modified (methionine sulfoxide). Serine 143 carries the phosphoserine modification. The LDL and other lipoprotein receptors binding stretch occupies residues 154-164 (HLRKLRKRLMR). 158-161 (LRKR) is a heparin binding site. The tract at residues 206-286 (TANLGAGAGK…GWFEPLVEDM (81 aa)) is lipid-binding and lipoprotein association. 225–232 (GARIRGRL) contributes to the heparin binding site. The segment at 262–316 (QQMRLQAEIFQARLKGWFEPLVEDMQRQWANLVEKIQASVAANPIPPSSVPQESQ) is homooligomerization. The interval 274–286 (RLKGWFEPLVEDM) is specificity for association with VLDL.

The protein belongs to the apolipoprotein A1/A4/E family. Homotetramer. May interact with ABCA1; functionally associated with ABCA1 in the biogenesis of HDLs. May interact with APP/A4 amyloid-beta peptide; the interaction is extremely stable in vitro but its physiological significance is unclear. May interact with MAPT. May interact with MAP2. In the cerebrospinal fluid, interacts with secreted SORL1. Interacts with PMEL; this allows the loading of PMEL luminal fragment on ILVs to induce fibril nucleation. APOE exists as multiple glycosylated and sialylated glycoforms within cells and in plasma. The extent of glycosylation and sialylation are tissue and context specific. Post-translationally, glycated in plasma VLDL. In terms of processing, phosphorylated by FAM20C in the extracellular medium.

Its subcellular location is the secreted. It is found in the extracellular space. The protein resides in the extracellular matrix. The protein localises to the extracellular vesicle. It localises to the endosome. Its subcellular location is the multivesicular body. Functionally, APOE is an apolipoprotein, a protein associating with lipid particles, that mainly functions in lipoprotein-mediated lipid transport between organs via the plasma and interstitial fluids. APOE is a core component of plasma lipoproteins and is involved in their production, conversion and clearance. Apolipoproteins are amphipathic molecules that interact both with lipids of the lipoprotein particle core and the aqueous environment of the plasma. As such, APOE associates with chylomicrons, chylomicron remnants, very low density lipoproteins (VLDL) and intermediate density lipoproteins (IDL) but shows a preferential binding to high-density lipoproteins (HDL). It also binds a wide range of cellular receptors including the LDL receptor/LDLR, the LDL receptor-related proteins LRP1, LRP2 and LRP8 and the very low-density lipoprotein receptor/VLDLR that mediate the cellular uptake of the APOE-containing lipoprotein particles. Finally, APOE also has a heparin-binding activity and binds heparan-sulfate proteoglycans on the surface of cells, a property that supports the capture and the receptor-mediated uptake of APOE-containing lipoproteins by cells. A main function of APOE is to mediate lipoprotein clearance through the uptake of chylomicrons, VLDLs, and HDLs by hepatocytes. APOE is also involved in the biosynthesis by the liver of VLDLs as well as their uptake by peripheral tissues ensuring the delivery of triglycerides and energy storage in muscle, heart and adipose tissues. By participating in the lipoprotein-mediated distribution of lipids among tissues, APOE plays a critical role in plasma and tissues lipid homeostasis. APOE is also involved in two steps of reverse cholesterol transport, the HDLs-mediated transport of cholesterol from peripheral tissues to the liver, and thereby plays an important role in cholesterol homeostasis. First, it is functionally associated with ABCA1 in the biogenesis of HDLs in tissues. Second, it is enriched in circulating HDLs and mediates their uptake by hepatocytes. APOE also plays an important role in lipid transport in the central nervous system, regulating neuron survival and sprouting. This Onychomys torridus (Southern grasshopper mouse) protein is Apolipoprotein E (Apoe).